The primary structure comprises 268 residues: Indole-3-glycerol phosphate synthase (268 aa).

The protein belongs to the TrpC family.

The enzyme catalyses 1-(2-carboxyphenylamino)-1-deoxy-D-ribulose 5-phosphate + H(+) = (1S,2R)-1-C-(indol-3-yl)glycerol 3-phosphate + CO2 + H2O. The protein operates within amino-acid biosynthesis; L-tryptophan biosynthesis; L-tryptophan from chorismate: step 4/5. The polypeptide is Indole-3-glycerol phosphate synthase (Acinetobacter baumannii (strain SDF)).